A 698-amino-acid polypeptide reads, in one-letter code: Glycine--tRNA ligase beta subunit (698 aa).

Belongs to the class-II aminoacyl-tRNA synthetase family. Tetramer of two alpha and two beta subunits.

The protein localises to the cytoplasm. The enzyme catalyses tRNA(Gly) + glycine + ATP = glycyl-tRNA(Gly) + AMP + diphosphate. This chain is Glycine--tRNA ligase beta subunit, found in Xanthomonas campestris pv. campestris (strain 8004).